A 421-amino-acid chain; its full sequence is Phosphatidylinositol 5-phosphate 4-kinase type-2 gamma (421 aa).

Position 2 is an N-acetylalanine (Ala-2). Ser-26 bears the Phosphoserine mark. Residues 43–420 (AADPLVGVFL…RFLDFITNIF (378 aa)) enclose the PIPK domain. Positions 69 to 75 (VMLLPDD) are required for interaction with PIP5K1A. Ser-349 carries the post-translational modification Phosphoserine.

As to quaternary structure, interacts with PIP5K1A; the interaction inhibits PIP5K1A kinase activity. Post-translationally, phosphorylated, phosphorylation is induced by EGF.

It localises to the endoplasmic reticulum. The protein resides in the cytoplasm. The enzyme catalyses a 1,2-diacyl-sn-glycero-3-phospho-(1D-myo-inositol-5-phosphate) + ATP = a 1,2-diacyl-sn-glycero-3-phospho-(1D-myo-inositol-4,5-bisphosphate) + ADP + H(+). It carries out the reaction 1,2-dihexadecanoyl-sn-glycero-3-phospho-(1D-myo-inositol-5-phosphate) + ATP = 1,2-dihexadecanoyl-sn-glycero-3-phospho-(1D-myo-inositol-4,5-bisphosphate) + ADP + H(+). It catalyses the reaction 1,2-dihexadecanoyl-sn-glycero-3-phospho-(1D-myo-inositol-5-phosphate) + GTP = 1,2-dihexadecanoyl-sn-glycero-3-phospho-(1D-myo-inositol-4,5-bisphosphate) + GDP + H(+). Functionally, phosphatidylinositol 5-phosphate 4-kinase with low enzymatic activity. May be a GTP sensor, has higher GTP-dependent kinase activity than ATP-dependent kinase activity. PIP4Ks negatively regulate insulin signaling through a catalytic-independent mechanism. They interact with PIP5Ks and suppress PIP5K-mediated PtdIns(4,5)P2 synthesis and insulin-dependent conversion to PtdIns(3,4,5)P3. This chain is Phosphatidylinositol 5-phosphate 4-kinase type-2 gamma (PIP4K2C), found in Pongo abelii (Sumatran orangutan).